Reading from the N-terminus, the 312-residue chain is tRNA dimethylallyltransferase (312 aa).

15 to 22 (GPTAAGKS) serves as a coordination point for ATP. A substrate-binding site is contributed by 17 to 22 (TAAGKS). Positions 40–43 (DSMQ) are interaction with substrate tRNA.

The protein belongs to the IPP transferase family. As to quaternary structure, monomer. The cofactor is Mg(2+).

The enzyme catalyses adenosine(37) in tRNA + dimethylallyl diphosphate = N(6)-dimethylallyladenosine(37) in tRNA + diphosphate. Functionally, catalyzes the transfer of a dimethylallyl group onto the adenine at position 37 in tRNAs that read codons beginning with uridine, leading to the formation of N6-(dimethylallyl)adenosine (i(6)A). In Streptomyces avermitilis (strain ATCC 31267 / DSM 46492 / JCM 5070 / NBRC 14893 / NCIMB 12804 / NRRL 8165 / MA-4680), this protein is tRNA dimethylallyltransferase.